A 154-amino-acid polypeptide reads, in one-letter code: Superoxide dismutase [Cu-Zn] (154 aa).

The Cu cation site is built by His47, His49, and His64. A disulfide bridge connects residues Cys58 and Cys147. Zn(2+) contacts are provided by His64, His72, His81, and Asp84. Residue His121 participates in Cu cation binding. A compositionally biased stretch (basic and acidic residues) spans 126–137 (DLGRGGNEESKK). The segment at 126–147 (DLGRGGNEESKKTGNAGPRPAC) is disordered.

It belongs to the Cu-Zn superoxide dismutase family. In terms of assembly, homodimer. It depends on Cu cation as a cofactor. Zn(2+) serves as cofactor.

The protein localises to the cytoplasm. It catalyses the reaction 2 superoxide + 2 H(+) = H2O2 + O2. Its function is as follows. Destroys radicals which are normally produced within the cells and which are toxic to biological systems. Plays an important role in the phase transition, and may be important in vivo, as it would facilitate the intracellular survival of the fungus by providing a non-toxic environment in the macrophage phagolysosomes. This is Superoxide dismutase [Cu-Zn] from Talaromyces marneffei (Penicillium marneffei).